Consider the following 3130-residue polypeptide: MKTTLFCSISFCNIIFFFLELSHEHFVGQSSNTHGASSVTDFNFSEEKNLKSFEGKNNNNDNYASINRLYRKKPYMKRSLINLENDLFRLEPISYIQRYYKKNINRSDIFHNKKERGSKVYSNVSSFHSFIQEGKEEVEVFSIWGSNSVLDHIDVLRDNGTVVFSVQPYYLDIYTCKEAILFTTSFYKDLDKSSITKINEDIEKFNEEIIKNEEQCLVGGKTDFDNLLIVLENAEKANVRKTLFDNTFNDYKNKKSSFYNCLKNKKNDYDKKIKNIKNEITKLLKNIESTGNMCKTESYVMNNNLYLLRVNEVKSTPIDLYLNRAKELLESSSKLVNPIKMKLGDNKNMYSIGYIHDEIKDIIKRYNFHLKHIEKGKEYIKRITQANNIADKMKKDELIKKIFESSKHFASFKYSNEMISKLDSLFIKNEEILNNLFNNIFNIFKKKYETYVDMKTIESKYTTVMTLSEHLLEYAMDVLKANPQKPIDPKANLDSEVVKLQIKINEKSNELDNAISQVKTLIIIMKSFYDIIISEKASMDEMEKKELSLNNYIEKTDYILQTYNIFKSKSNIINNNSKNISSKYITIEGLKNDIDELNSLISYFKDSQETLIKDDELKKNMKTDYLNNVKYIEENVTHINEIILLKDSITQRIADIDELNSLNLININDFINEKNISQEKVSYNLNKLYKGSFEELESELSHFLDTKYLFHEKKSVNELQTILNTSNNECAKLNFMKSDNNNNNNNSNIINLLKTELSHLLSLKENIIKKLLNHIEQNIQNSSNKYTITYTDINNRMEDYKEEIESLEVYKHTIGNIQKEYILHLYENDKNALAVHNTSMQILQYKDAIQNIKNKISDDIKILKKYKEMNQDLLNYYEILDKKLKDNTYIKEMHTASLVQITQYIPYEDKTISELEQEFNNNNQKLDNILQDINAMNLNINILQTLNIGINACNTNNKNVEHLLNKKIELKNILNDQMKIIKNDDIIQDNEKENFSNVLKKEEEKLEKELDDIKFNNLKMDIHKLLNSYDHTKQNIESNLKINLDSFEKEKDSWVHFKSTIDSLYVEYNICNQKTHNTIKQQKNDIIELIYKRIKDINQEIIEKVDNYYSLSDKALTKLKSIHFNIDKEKYKNPKSQENIKLLEDRVMILEKKIKEDKDALIQIKNLSHDHFVNADNEKKKQKEKEEDDEQTHYSKKRKVMGDIYKDIKKNLDELNNKNLIDITLNEANKIESEYEKILIDDICEQITNEAKKSDTIKEKIESYKKDIDYVDVDVSKTRNDHHLNGDKIHDSFFYEDTLNYKAYFDKLKDLYENINKLTNESNGLKSDAHNNNTQVDKLKEINLQVFSNLGNIIKYVEKLENTLHELKDMYEFLETIDINKILKSIHNSMKKSEEYSNETKKIFEQSVNITNQFIEDVEILKTSINPNYESLNDDQIDDNIKSLVLKKEEISEKRKQVNKYITDIESNKEQSDLHLRYASRSIYVIDLFIKHEIINPSDGKNFDIIKVKEMINKTKQVSNEAMEYANKMDEKNKDIIKIENELYNLINNNIRSLKGVKYEKVRKQARNAIDDINNIHSNIKTILTKSKERLDEIKKQPNIKREGDVLNNDKTKIAYITIQINNGRIESNLLNILNMKHNIDTILNKAMDYMNDVSKSDQIVINIDSLNMNDIYNKDKDLLINILKEKQNMEAEYKKMNEMYNYVNETEKEIIKHKKNYEIRIMEHIKKETNEKKKKFMESNNKSLTTLMDSFRSMFYNEYINDYNINENFEKHQNILNEIYNGFNESYNIINTKMTEIINDNLDYNEIKEIKEVAQTEYDKLNKKVDELKNYLNNIKEQEGHRLIDYIKEKIFNLYIKCSEQQNIIDDSYNYITVKKQYIKTIEDVKFLLDSLNTIEEKNKSVANLEICTNKEDIKNLLKHVIKLANFSGIIVMSDTNTEITPENPLEDNDLLNLQLYFERKHEITSTLENDSDLELDHLGSNSDESIDNLKVYNDIIELHTYSTQILKYLDNIQKLKGDCNDLVKDCKELRELSTALYDLKIQITSVINRENDISNNIDIVSNKLNEIDAIQYNFEKYKEIFDNVEEYKTLDDTKNAYIVKKAEILKNVDINKTKEDLDIYFNDLDELEKSLTLSSNEMEIKTIVQNSYNSFSDINKNINDIDKEMKTLIPMLDELLNEGHNIDISLYNFIIRNIQIKIGNDIKNIREQENDTNICFEYIQNNYNFIKSDISIFNKYDDHIKVDNYISNNIDVVNKHNSLLSEHVINATNIIENIMTSIVEINEDTEMNSLEETQDKLLELYENFKKEKNIINNNYKIVHFNKLKEIENSLETYNSISTNFNKINETQNIDILKNEFNNIKTKINDKVKELVHVDSTLTLESIQTFNNLYGDLMSNIQDVYKYEDINNVELKKVKLYIENITNLLGRINTFIKELDKYQDENNGIDKYIEINKENNSYIIKLKEKANNLKENFSKLLQNIKRNETELYNINNIKDDIMNTGKSVNNIKQKFSSNLPLKEKLFQMEEMLLNINNIMNETKRISNTAAYTNITLQDIENNKNKENNNMNIETIDKLIDHIKIHNEKIQAEILIIDDAKRKVKEITDNINKAFNEITENYNNENNGVIKSAKNIVDEATYLNNELDKFLLKLNELLSHNNNDIKDLGDEKLILKEEEERKERERLEKAKQEEERKERERIEKEKQEKERLEREKQEQLKKEEELRKKEQERQEQQQKEEALKRQEQERLQKEEELKRQEQERLEREKQEQLQKEEELKRQEQERLQKEEALKRQEQERLQKEEELKRQEQERLEREKQEQLQKEEELKRQEQERLQKEEALKRQEQERLQKEEELKRQEQERLERKKIELAEREQHIKSKLESDMVKIIKDELTKEKDEIIKNKDIKLRHSLEQKWLKHLQNILSLKIDSLLNKNDEVIKDNETQLKTNILNSLKNQLYLNLKRELNEIIKEYEENQKKILHSNQLVNDSLEQKTNRLVDIKPTKHGDIYTNKLSDNETEMLITSKEKKDETESTKRSGTDHTNSSESTTDDNTNDRNFSRSKNLSVAIYTAGSVALCVLIFSSIGLLLIKTNSGDNNSNEINEAFEPNDDVLFKEKDEIIEITFNDNDSTI.

Positions 1–24 are cleaved as a signal peptide; the sequence is MKTTLFCSISFCNIIFFFLELSHE. Over 25 to 3066 the chain is Extracellular; it reads HFVGQSSNTH…FSRSKNLSVA (3042 aa). N-linked (GlcNAc...) asparagine glycans are attached at residues N43, N105, N123, and N159. 3 LRR repeats span residues 182–206, 300–323, and 419–443; these read FTTS…EKFN, VMNN…LYLN, and ISKL…IFNI. Positions 446–557 are erythrocyte binding domain (EBD); sequence KKYETYVDMK…SLNNYIEKTD (112 aa). Residues 490–517 are a coiled coil; that stretch reads KANLDSEVVKLQIKINEKSNELDNAISQ. N-linked (GlcNAc...) asparagine glycosylation is found at N575, N579, N635, N675, N724, and N745. An LRR 4 repeat occupies 659–683; it reads LNSLNLININDFINEKNISQEKVSY. The LRR 5 repeat unit spans residues 757-778; sequence LSHLLSLKENIIKKLLNHIEQN. N781 is a glycosylation site (N-linked (GlcNAc...) asparagine). Residues 801–824 form an LRR 6 repeat; it reads KEEIESLEVYKHTIGNIQKEYILH. Residues N837 and N994 are each glycosylated (N-linked (GlcNAc...) asparagine). The LRR 7 repeat unit spans residues 1116–1139; the sequence is LTKLKSIHFNIDKEKYKNPKSQEN. The N-linked (GlcNAc...) asparagine glycan is linked to N1166. Basic and acidic residues predominate over residues 1173–1185; the sequence is VNADNEKKKQKEK. The disordered stretch occupies residues 1173-1195; that stretch reads VNADNEKKKQKEKEEDDEQTHYS. One copy of the LRR 8 repeat lies at 1305–1328; that stretch reads FDKLKDLYENINKLTNESNGLKSD. N-linked (GlcNAc...) asparagine glycosylation is found at N1320 and N1332. Residues 1336 to 1362 form an LRR 9 repeat; the sequence is VDKLKEINLQVFSNLGNIIKYVEKLEN. N1398 and N1409 each carry an N-linked (GlcNAc...) asparagine glycan. The LRR 10 repeat unit spans residues 1438–1461; sequence DDNIKSLVLKKEEISEKRKQVNKY. N-linked (GlcNAc...) asparagine glycosylation is present at N1513. LRR repeat units follow at residues 1536–1561 and 1628–1652; these read IIKI…KYEK and SNLL…DYMN. N1705, N1742, and N1785 each carry an N-linked (GlcNAc...) asparagine glycan. 2 LRR repeats span residues 1795-1818 and 1890-1913; these read MTEI…AQTE and LDSL…TNKE. A coiled-coil region spans residues 1805–1842; that stretch reads YNEIKEIKEVAQTEYDKLNKKVDELKNYLNNIKEQEGH. N-linked (GlcNAc...) asparagine glycans are attached at residues N1900, N1927, and N1971. LRR repeat units lie at residues 2014–2041 and 2052–2076; these read IQKL…LYDL and ENDI…QYNF. A glycan (N-linked (GlcNAc...) asparagine) is linked at N2113. One copy of the LRR 17 repeat lies at 2126–2152; it reads LDELEKSLTLSSNEMEIKTIVQNSYNS. Residues N2212, N2268, N2346, N2421, N2456, N2473, N2484, N2537, and N2550 are each glycosylated (N-linked (GlcNAc...) asparagine). LRR repeat units follow at residues 2345-2368 and 2409-2434; these read INET…INDK and NVEL…TFIK. An LRR 20 repeat occupies 2522–2545; it reads LFQMEEMLLNINNIMNETKRISNT. LRR repeat units follow at residues 2572-2599 and 2650-2671; these read IDKL…AKRK and LNEL…KLIL. A coiled-coil region spans residues 2661 to 2874; that stretch reads IKDLGDEKLI…KIELAEREQH (214 aa). The disordered stretch occupies residues 2680–2753; the sequence is RERLEKAKQE…QERLQKEEEL (74 aa). LRR repeat units lie at residues 2915–2936 and 2937–2959; these read LKHL…NDEV and IKDN…LYLN. N-linked (GlcNAc...) asparagine glycans are attached at residues N2940, N2986, and N3015. A disordered region spans residues 3021-3056; the sequence is ITSKEKKDETESTKRSGTDHTNSSESTTDDNTNDRN. Basic and acidic residues predominate over residues 3023–3038; the sequence is SKEKKDETESTKRSGT. The span at 3039 to 3050 shows a compositional bias: low complexity; sequence DHTNSSESTTDD. 3 N-linked (GlcNAc...) asparagine glycosylation sites follow: N3042, N3056, and N3062. The helical transmembrane segment at 3067-3087 threads the bilayer; that stretch reads IYTAGSVALCVLIFSSIGLLL. Over 3088 to 3130 the chain is Cytoplasmic; that stretch reads IKTNSGDNNSNEINEAFEPNDDVLFKEKDEIIEITFNDNDSTI.

Forms a heterodimer composed of the 285 kDa and the 85 kDa forms. In terms of processing, proteolytically processed into multiple fragments following schizont rupture. In the mature schizont stage prior to merozoite release, full length RH2b is processed post-Golgi into C-terminal 285 kDa and N-terminal 85 kDa forms. During merozoite invasion of host erythrocytes, further processing occurs generating a 140 kDa C-terminal form. At the same time, the C-terminal transmembrane region is probably cleaved, probably by a rhomboid protease, to shed all the different processed protein forms from the membrane leaving a transmembrane 7 kDa form on the merozoite surface.

It is found in the cell membrane. The protein localises to the cytoplasmic vesicle. Its subcellular location is the secretory vesicle. The protein resides in the rhoptry. It localises to the secreted. It is found in the cell junction. The protein localises to the tight junction. Its function is as follows. During the asexual blood stage, binds to a chymotrypsin sensitive, neuraminidase and trypsin resistant receptor on the surface of the host erythrocyte. Despite its binding capacity, appears to be dispensable for merozoite invasion of host erythrocytes. Functionally, during the asexual blood stage, binds to a trypsin-resistant and chymotrypsin and neuraminidase sensitive receptor on the surface of the host erythrocyte. The sequence is that of Reticulocyte-binding protein homolog 2a from Plasmodium falciparum (isolate 3D7).